Consider the following 455-residue polypeptide: Phosphoglucosamine mutase (455 aa).

Serine 107 (phosphoserine intermediate) is an active-site residue. 4 residues coordinate Mg(2+): serine 107, aspartate 247, aspartate 249, and aspartate 251. A Phosphoserine modification is found at serine 107.

Belongs to the phosphohexose mutase family. The cofactor is Mg(2+). Activated by phosphorylation.

The catalysed reaction is alpha-D-glucosamine 1-phosphate = D-glucosamine 6-phosphate. In terms of biological role, catalyzes the conversion of glucosamine-6-phosphate to glucosamine-1-phosphate. In Leuconostoc citreum (strain KM20), this protein is Phosphoglucosamine mutase.